Consider the following 130-residue polypeptide: Small ribosomal subunit protein uS11 (130 aa).

This sequence belongs to the universal ribosomal protein uS11 family. In terms of assembly, part of the 30S ribosomal subunit. Interacts with proteins S7 and S18. Binds to IF-3.

Functionally, located on the platform of the 30S subunit, it bridges several disparate RNA helices of the 16S rRNA. Forms part of the Shine-Dalgarno cleft in the 70S ribosome. This is Small ribosomal subunit protein uS11 from Xanthomonas campestris pv. campestris (strain B100).